The primary structure comprises 180 residues: MTKPVYSKTPSNPEKSCKSRGSNLRIHFKNTRESAMAIKGMLLTRAKAYLNNVLAHRECIPFRRFKGGVGRTGQAKIFGTSQGRWPKKSVEHILSLLQNAEANAEAKGLNVEKLKIAHVQVQRAQQQRRRTYRAHGRINPYMCSPSTVEFILTEVEKAVPKPAEESAQKKKSVATQEISA.

2 disordered regions span residues 1 to 20 and 160 to 180; these read MTKPVYSKTPSNPEKSCKSR and PKPAEESAQKKKSVATQEISA. The span at 8 to 20 shows a compositional bias: polar residues; sequence KTPSNPEKSCKSR.

This sequence belongs to the universal ribosomal protein uL22 family.

This is Large ribosomal subunit protein uL22 (rpl17) from Dictyostelium discoideum (Social amoeba).